Reading from the N-terminus, the 65-residue chain is Large ribosomal subunit protein bL35 (65 aa).

Belongs to the bacterial ribosomal protein bL35 family.

The polypeptide is Large ribosomal subunit protein bL35 (Neisseria meningitidis serogroup A / serotype 4A (strain DSM 15465 / Z2491)).